Reading from the N-terminus, the 430-residue chain is Probable protein phosphatase 1N (430 aa).

The interval 16–65 (CKKKEREKEGREEEEEEEAGRRAPEGPRSLLTAPRRAQRPHGGAEASGGL) is disordered. The span at 17–26 (KKKEREKEGR) shows a compositional bias: basic and acidic residues. In terms of domain architecture, PPM-type phosphatase spans 66–326 (RFGASAAQGW…DNMTCILVCF (261 aa)). Mn(2+) contacts are provided by Asp103, Gly104, Asp274, and Asp317. The segment at 407 to 430 (GEKGQDGAGKSNPTHLGSALDMEA) is disordered.

This sequence belongs to the PP2C family. It depends on Mg(2+) as a cofactor. Mn(2+) serves as cofactor.

The catalysed reaction is O-phospho-L-seryl-[protein] + H2O = L-seryl-[protein] + phosphate. The enzyme catalyses O-phospho-L-threonyl-[protein] + H2O = L-threonyl-[protein] + phosphate. In Homo sapiens (Human), this protein is Probable protein phosphatase 1N (PPM1N).